The following is a 190-amino-acid chain: Ribose 1,5-bisphosphate phosphokinase PhnN (190 aa).

A disordered region spans residues 135–159 (RGREPEPGIGQRLARPDPAPGHQAD).

Belongs to the ribose 1,5-bisphosphokinase family.

The catalysed reaction is alpha-D-ribose 1,5-bisphosphate + ATP = 5-phospho-alpha-D-ribose 1-diphosphate + ADP. Its pathway is metabolic intermediate biosynthesis; 5-phospho-alpha-D-ribose 1-diphosphate biosynthesis; 5-phospho-alpha-D-ribose 1-diphosphate from D-ribose 5-phosphate (route II): step 3/3. Catalyzes the phosphorylation of ribose 1,5-bisphosphate to 5-phospho-D-ribosyl alpha-1-diphosphate (PRPP). This is Ribose 1,5-bisphosphate phosphokinase PhnN from Pseudofrankia inefficax (strain DSM 45817 / CECT 9037 / DDB 130130 / EuI1c) (Frankia inefficax).